The primary structure comprises 122 residues: Double-headed protease inhibitor, submandibular gland (122 aa).

Kazal-like domains are found at residues Gly-10–Ile-70 and Glu-71–Ser-121. 6 disulfide bridges follow: Cys-16-Cys-50, Cys-28-Cys-47, Cys-36-Cys-68, Cys-72-Cys-101, Cys-79-Cys-98, and Cys-87-Cys-119.

It localises to the secreted. In terms of biological role, this inhibitor is composed of two homologous actively inhibiting halves: one which inhibits trypsin, the other which inhibits elastase. This Martes martes (European pine marten) protein is Double-headed protease inhibitor, submandibular gland.